Here is a 455-residue protein sequence, read N- to C-terminus: Chromosomal replication initiator protein DnaA (455 aa).

The tract at residues 1–74 is domain I, interacts with DnaA modulators; that stretch reads MFDIEKFWQH…IQSAYGYAGI (74 aa). The segment at 74 to 117 is domain II; the sequence is IEILPVFQINENNDSPERIVTPEPRYAIQLQQEKRAHKQFTKNL. The tract at residues 118 to 334 is domain III, AAA+ region; the sequence is KLNEKYTFDN…GALVKVQAYA (217 aa). 4 residues coordinate ATP: Gly162, Gly164, Lys165, and Thr166. Residues 335–455 are domain IV, binds dsDNA; the sequence is TIERADINVN…VFDLKQMIEH (121 aa).

Belongs to the DnaA family. Oligomerizes as a right-handed, spiral filament on DNA at oriC.

It is found in the cytoplasm. In terms of biological role, plays an essential role in the initiation and regulation of chromosomal replication. ATP-DnaA binds to the origin of replication (oriC) to initiate formation of the DNA replication initiation complex once per cell cycle. Binds the DnaA box (a 9 base pair repeat at the origin) and separates the double-stranded (ds)DNA. Forms a right-handed helical filament on oriC DNA; dsDNA binds to the exterior of the filament while single-stranded (ss)DNA is stabiized in the filament's interior. The ATP-DnaA-oriC complex binds and stabilizes one strand of the AT-rich DNA unwinding element (DUE), permitting loading of DNA polymerase. After initiation quickly degrades to an ADP-DnaA complex that is not apt for DNA replication. Binds acidic phospholipids. This is Chromosomal replication initiator protein DnaA from Lactobacillus helveticus (strain DPC 4571).